A 526-amino-acid chain; its full sequence is Dolichyl pyrophosphate Glc1Man9GlcNAc2 alpha-1,3-glucosyltransferase (526 aa).

11 helical membrane-spanning segments follow: residues 9-29 (AGGH…CLLI), 108-128 (FSVI…CKCI), 143-163 (FILS…HIHF), 188-208 (GALL…VAPA), 238-258 (VTSL…PFLA), 334-354 (PLAT…CLWF), 361-380 (GFLR…GWHV), 400-422 (AGDA…PLLF), 427-449 (LPIK…KTLF), 461-481 (TVYL…LPFT), and 487-507 (YPFI…TYAW).

This sequence belongs to the ALG6/ALG8 glucosyltransferase family.

The protein resides in the endoplasmic reticulum membrane. The enzyme catalyses an alpha-D-Glc-(1-&gt;3)-alpha-D-Man-(1-&gt;2)-alpha-D-Man-(1-&gt;2)-alpha-D-Man-(1-&gt;3)-[alpha-D-Man-(1-&gt;2)-alpha-D-Man-(1-&gt;3)-[alpha-D-Man-(1-&gt;2)-alpha-D-Man-(1-&gt;6)]-alpha-D-Man-(1-&gt;6)]-beta-D-Man-(1-&gt;4)-beta-D-GlcNAc-(1-&gt;4)-alpha-D-GlcNAc-diphospho-di-trans,poly-cis-dolichol + a di-trans,poly-cis-dolichyl beta-D-glucosyl phosphate = an alpha-D-Glc-(1-&gt;3)-alpha-D-Glc-(1-&gt;3)-alpha-D-Man-(1-&gt;2)-alpha-D-Man-(1-&gt;2)-alpha-D-Man-(1-&gt;3)-[alpha-D-Man-(1-&gt;2)-alpha-D-Man-(1-&gt;3)-[alpha-D-Man-(1-&gt;2)-alpha-D-Man-(1-&gt;6)]-alpha-D-Man-(1-&gt;6)]-beta-D-Man-(1-&gt;4)-beta-D-GlcNAc-(1-&gt;4)-alpha-D-GlcNAc-diphospho-di-trans,poly-cis-dolichol + a di-trans,poly-cis-dolichyl phosphate + H(+). Its pathway is protein modification; protein glycosylation. Dolichyl pyrophosphate Glc1Man9GlcNAc2 alpha-1,3-glucosyltransferase that operates in the biosynthetic pathway of dolichol-linked oligosaccharides, the glycan precursors employed in protein asparagine (N)-glycosylation. The assembly of dolichol-linked oligosaccharides begins on the cytosolic side of the endoplasmic reticulum membrane and finishes in its lumen. The sequential addition of sugars to dolichol pyrophosphate produces dolichol-linked oligosaccharides containing fourteen sugars, including two GlcNAcs, nine mannoses and three glucoses. Once assembled, the oligosaccharide is transferred from the lipid to nascent proteins by oligosaccharyltransferases. In the lumen of the endoplasmic reticulum, adds the second glucose residue from dolichyl phosphate glucose (Dol-P-Glc) onto the lipid-linked oligosaccharide intermediate Glc(1)Man(9)GlcNAc(2)-PP-Dol to produce Glc(2)Man(9)GlcNAc(2)-PP-Dol. Glc(2)Man(9)GlcNAc(2)-PP-Dol is a substrate for ALG10, the following enzyme in the biosynthetic pathway. Required for PKD1/Polycystin-1 maturation and localization to the plasma membrane of the primary cilia. The sequence is that of Dolichyl pyrophosphate Glc1Man9GlcNAc2 alpha-1,3-glucosyltransferase from Mus musculus (Mouse).